The primary structure comprises 260 residues: MNNLNDPPNWNIQPNPRADGGDGSKWNYALLVPMLGLAAFRWIWSRESQKEIEKARRAYHQQTAAFQQDLDAKYHAVISEHRRAVAQLSLELEKEQNRTTSFREALISQGRKLAEEKKLLEQERAQIIQEKSQRQPLRRAYLSCLEEEDEWQRRAQLVLKEVGEALEERQNIYCSLILPRSARQQLEKSLLVRTSADPVAADLEMATGLSDIFKHDKHCGDVWNTNKRQNGKLMWMYLKYWELLVELKKFKKIEKVILGK.

Residues 47–135 (ESQKEIEKAR…QIIQEKSQRQ (89 aa)) adopt a coiled-coil conformation.

This is Coiled-coil domain-containing protein 127 (Ccdc127) from Rattus norvegicus (Rat).